Consider the following 179-residue polypeptide: Translation initiation factor IF-3 (179 aa).

It belongs to the IF-3 family. Monomer.

It localises to the cytoplasm. In terms of biological role, IF-3 binds to the 30S ribosomal subunit and shifts the equilibrium between 70S ribosomes and their 50S and 30S subunits in favor of the free subunits, thus enhancing the availability of 30S subunits on which protein synthesis initiation begins. The protein is Translation initiation factor IF-3 of Bradyrhizobium diazoefficiens (strain JCM 10833 / BCRC 13528 / IAM 13628 / NBRC 14792 / USDA 110).